The chain runs to 612 residues: MLLLVLLFVFISATNASDVGRRELEKHFDVGDSSLDSVGDVLLKLKKLAHQRAFGNREFGHDAEEDSKKPVAISVLQPTVAKDVSPYLFEGDIFLSKKQAINILKEVSGIESKSKPNVRGRRSFDASPESKWPTTAPIKYRFHESIDFYAVSNIIKAIRYWENVTCLEFENSPDVADNEDFIEFFQGQGCYSMIGRNGGRQGVSIGENCVKAGVIEHEIGHAIGMWHEQSRPDAQSYIKVESDFILPSYVSDFLQRDKDIDTLGLPYDLGSVMHYGSTAFSVDQSSKTLITRDPLYQSTIGQRETLSFLDIETINKAYCSDRCSGSNDCKNGGYPHPKQCDTCLCPNGLSGPKCEDFEPPRKAECGGKIVVKEEWQSIESPGFPDPGYDPDQKCNWVFEVAGKRIEFEFIEEFSFLCTSTCVDYVEMKISADLRPTGFRWCCFNIPKGSFVSELNIAVIIFRSQLTNDVGFKLQARATDLPARTTPAPVVITTTPVPTTIEGTDQWAEWGSWSQCSRSCGGCGIMSRVRVCRTKQCKGRRQEFSTCNLKACPIDKHCAKLLANDKICNGRVCTKASQALSGCLEPQCCPPFINVDGTCQSDSPLLNDFELAK.

An N-terminal signal peptide occupies residues 1 to 16; that stretch reads MLLLVLLFVFISATNA. N15 is a glycosylation site (N-linked (GlcNAc...) asparagine). The propeptide occupies 17-122; that stretch reads SDVGRRELEK…KSKPNVRGRR (106 aa). Residues 123–320 form the Peptidase M12A domain; the sequence is SFDASPESKW…IETINKAYCS (198 aa). The N-linked (GlcNAc...) asparagine glycan is linked to N163. 8 disulfides stabilise this stretch: C166–C319, C190–C209, C329–C343, C345–C354, C365–C394, C515–C546, C519–C551, and C531–C536. A Zn(2+)-binding site is contributed by H217. E218 is a catalytic residue. 2 residues coordinate Zn(2+): H221 and H227. In terms of domain architecture, EGF-like spans 320–355; it reads SDRCSGSNDCKNGGYPHPKQCDTCLCPNGLSGPKCE. Residues 365 to 478 enclose the CUB domain; that stretch reads CGGKIVVKEE…VGFKLQARAT (114 aa). The region spanning 503 to 552 is the TSP type-1 domain; the sequence is TDQWAEWGSWSQCSRSCGGCGIMSRVRVCRTKQCKGRRQEFSTCNLKACP.

Zn(2+) is required as a cofactor.

It localises to the secreted. Its activity is regulated as follows. Inhibited by 1,10-phenanthroline. Its function is as follows. Metalloprotease. Involved in molting, a process during larval stages in which a new cuticle is formed and the old cuticle is shed. The protein is Zinc metalloproteinase nas-36 of Haemonchus contortus (Barber pole worm).